Here is a 1157-residue protein sequence, read N- to C-terminus: ATP-dependent helicase/deoxyribonuclease subunit B (1157 aa).

The UvrD-like helicase ATP-binding domain maps to 1-275; it reads MTLHAYLGRA…QYFNQLYRFN (275 aa). Position 8–15 (8–15) interacts with ATP; it reads GRAGTGKS. Residues 269 to 583 enclose the UvrD-like helicase C-terminal domain; that stretch reads NQLYRFNNQD…SIGTMDLAKV (315 aa). C784, C1112, C1115, and C1121 together coordinate [4Fe-4S] cluster.

The protein belongs to the helicase family. AddB/RexB type 1 subfamily. Heterodimer of AddA and AddB. Requires Mg(2+) as cofactor. It depends on [4Fe-4S] cluster as a cofactor.

Functionally, the heterodimer acts as both an ATP-dependent DNA helicase and an ATP-dependent, dual-direction single-stranded exonuclease. Recognizes the chi site generating a DNA molecule suitable for the initiation of homologous recombination. The AddB subunit has 5' -&gt; 3' nuclease activity but not helicase activity. The polypeptide is ATP-dependent helicase/deoxyribonuclease subunit B (Staphylococcus aureus (strain JH9)).